A 419-amino-acid polypeptide reads, in one-letter code: Carboxypeptidase A2 (419 aa).

The first 18 residues, 1–18 (MAMRLILFFGALFGHIYC), serve as a signal peptide directing secretion. Residues 19-114 (LETFVGDQVL…EMLFNRRRER (96 aa)) constitute a propeptide, activation peptide. A Peptidase M14 domain is found at 122–414 (AYHTLEEISQ…LGLKAIMEHV (293 aa)). Zn(2+) contacts are provided by His179 and Glu182. Residues 179–182 (HARE), Arg237, and 254–255 (NR) contribute to the substrate site. Residues Cys248 and Cys271 are joined by a disulfide bond. His306 contacts Zn(2+). 307 to 308 (SY) contributes to the substrate binding site. Cys320 and Cys354 are oxidised to a cystine. Tyr358 serves as a coordination point for substrate. The active-site Proton donor/acceptor is the Glu380.

This sequence belongs to the peptidase M14 family. Zn(2+) is required as a cofactor.

It localises to the secreted. It catalyses the reaction Similar to that of carboxypeptidase A (EC 3.4.17.1), but with a preference for bulkier C-terminal residues.. Its function is as follows. Carboxypeptidase that catalyzes the release of a C-terminal amino acid, with a preference for large aromatic C-terminal residues. This Homo sapiens (Human) protein is Carboxypeptidase A2 (CPA2).